The primary structure comprises 319 residues: Cutinase cut1 (319 aa).

The N-terminal stretch at Met-1–Ala-58 is a signal peptide. Tyr-118 contributes to the poly(ethylene terephthalate) binding site. Ser-188 acts as the Nucleophile in catalysis. 2 residues coordinate poly(ethylene terephthalate): Met-189 and Trp-213. Active-site charge relay system residues include Asp-234 and His-266. Residues Cys-299 and Cys-317 are joined by a disulfide bond.

This sequence belongs to the AB hydrolase superfamily.

It is found in the secreted. The protein resides in the periplasm. The catalysed reaction is an acetyl ester + H2O = an aliphatic alcohol + acetate + H(+). It catalyses the reaction a butanoate ester + H2O = an aliphatic alcohol + butanoate + H(+). The enzyme catalyses pentanoate ester + H2O = pentanoate + an aliphatic alcohol + H(+). It carries out the reaction an octanoate ester + H2O = an aliphatic alcohol + octanoate + H(+). The catalysed reaction is decanoate ester + H2O = decanoate + an aliphatic alcohol + H(+). It catalyses the reaction a dodecanoate ester + H2O = an aliphatic alcohol + dodecanoate + H(+). The enzyme catalyses a tetradecanoate ester + H2O = an aliphatic alcohol + tetradecanoate + H(+). It carries out the reaction hexadecanoate ester + H2O = an aliphatic alcohol + hexadecanoate + H(+). The catalysed reaction is cutin + H2O = cutin monomers.. It catalyses the reaction (ethylene terephthalate)(n) + H2O = (ethylene terephthalate)(n-1) + 4-[(2-hydroxyethoxy)carbonyl]benzoate + H(+). Activated by magnesium ions. Activated by calcium ions. In terms of biological role, catalyzes the hydrolysis of cutin, a polyester that forms the structure of plant cuticle. Shows esterase activity towards p-nitrophenol-linked aliphatic esters (pNP-aliphatic esters). Capable of degrading the plastic poly(ethylene terephthalate) (PET), the most abundant polyester plastic in the world. This Thermobifida fusca (Thermomonospora fusca) protein is Cutinase cut1.